The sequence spans 344 residues: Putative NAD(P)H nitroreductase MT3217 (344 aa).

FMN-binding positions include 40–44 (QPWRW) and Arg-326.

It belongs to the nitroreductase family. In terms of assembly, interacts with human TLR2. FMN serves as cofactor.

Its function is as follows. Stimulates pro-inflammatory cytokine expression via TLR2 signaling pathway. Activation of TLR2 results in the phosphorylation and activation of NF-kappa-B. Also induces TLR2 expression. May influence the innate immune responses to facilitate the survival of M.tuberculosis in the granulomatous microenvironment. The chain is Putative NAD(P)H nitroreductase MT3217 from Mycobacterium tuberculosis (strain CDC 1551 / Oshkosh).